Consider the following 804-residue polypeptide: Zinc finger protein YGR067C (804 aa).

C2H2-type zinc fingers lie at residues 8–30 and 36–59; these read YICS…ERSH and FQCQ…RTVH. Residues 782 to 796 show a composition bias toward polar residues; it reads QEFSASSTDNKQSKN. Positions 782 to 804 are disordered; sequence QEFSASSTDNKQSKNIEIFSQIK.

The protein resides in the nucleus. The chain is Zinc finger protein YGR067C from Saccharomyces cerevisiae (strain ATCC 204508 / S288c) (Baker's yeast).